The sequence spans 55 residues: Large ribosomal subunit protein bL33 (55 aa).

This sequence belongs to the bacterial ribosomal protein bL33 family.

The protein is Large ribosomal subunit protein bL33 of Blochmanniella pennsylvanica (strain BPEN).